Consider the following 397-residue polypeptide: Elongation factor Tu (397 aa).

The region spanning 10–206 is the tr-type G domain; sequence KPHVNIGTIG…AVDTSIPQPE (197 aa). The segment at 19–26 is G1; the sequence is GHIDHGKT. A GTP-binding site is contributed by 19-26; that stretch reads GHIDHGKT. Residue T26 coordinates Mg(2+). A G2 region spans residues 62–66; sequence GITIS. A G3 region spans residues 83–86; sequence DCPG. GTP-binding positions include 83 to 87 and 138 to 141; these read DCPGH and NKSD. The tract at residues 138-141 is G4; sequence NKSD. A G5 region spans residues 176-178; it reads SAL.

The protein belongs to the TRAFAC class translation factor GTPase superfamily. Classic translation factor GTPase family. EF-Tu/EF-1A subfamily. In terms of assembly, monomer.

Its subcellular location is the cytoplasm. It catalyses the reaction GTP + H2O = GDP + phosphate + H(+). GTP hydrolase that promotes the GTP-dependent binding of aminoacyl-tRNA to the A-site of ribosomes during protein biosynthesis. The polypeptide is Elongation factor Tu (Salinispora arenicola (strain CNS-205)).